The primary structure comprises 543 residues: Serendipity locus protein alpha (543 aa).

The protein resides in the cytoplasm. The protein localises to the cell membrane. Its function is as follows. Required for the cellularization of the syncytial blastoderm embryo. Involved in the localization of the actin filaments just prior to and during plasma membrane invagination. Sry-alpha together with nullo and bnk may provide auxiliary functions, by acting both to stabilize a large and dynamic microfilament structure and regulate its functions. This is Serendipity locus protein alpha (Sry-alpha) from Drosophila subobscura (Fruit fly).